The chain runs to 44 residues: Photosystem I reaction center subunit IX (44 aa).

The helical transmembrane segment at 7 to 27 (YLSTAPVLATLWFGSLAGLLI) threads the bilayer.

It belongs to the PsaJ family.

The protein resides in the plastid. Its subcellular location is the chloroplast thylakoid membrane. May help in the organization of the PsaE and PsaF subunits. In Cycas taitungensis (Prince sago), this protein is Photosystem I reaction center subunit IX.